The sequence spans 350 residues: Sterol-4-alpha-carboxylate 3-dehydrogenase ERG26, decarboxylating (350 aa).

NADP(+) is bound by residues 12–18, 63–64, and 85–87; these read GGSGFLG, DL, and SAS. Substrate-binding residues include Ser125 and Tyr152. Residues Tyr152, Lys156, and 179 to 182 each bind NADP(+); that span reads PAGI. The active-site Proton donor is the Lys156.

This sequence belongs to the 3-beta-HSD family. Heterotetramer of ERG25, ERG26, ERG27 and ERG28. ERG28 acts as a scaffold to tether ERG27 and other 4,4-demethylation-related enzymes, forming a demethylation enzyme complex, in the endoplasmic reticulum.

The protein resides in the endoplasmic reticulum membrane. The catalysed reaction is 4beta-methylzymosterol-4alpha-carboxylate + NADP(+) = 3-dehydro-4-methylzymosterol + CO2 + NADPH. Its pathway is steroid biosynthesis; zymosterol biosynthesis; zymosterol from lanosterol: step 4/6. Sterol-4-alpha-carboxylate 3-dehydrogenase; part of the third module of ergosterol biosynthesis pathway that includes the late steps of the pathway. ERG26 is a catalytic component of the C-4 demethylation complex that catalyzes the oxidative decarboxylation that results in a reduction of the 3-beta-hydroxy group at the C-3 carbon to an oxo group. The third module or late pathway involves the ergosterol synthesis itself through consecutive reactions that mainly occur in the endoplasmic reticulum (ER) membrane. Firstly, the squalene synthase ERG9 catalyzes the condensation of 2 farnesyl pyrophosphate moieties to form squalene, which is the precursor of all steroids. Squalene synthase is crucial for balancing the incorporation of farnesyl diphosphate (FPP) into sterol and nonsterol isoprene synthesis. Secondly, the squalene epoxidase ERG1 catalyzes the stereospecific oxidation of squalene to (S)-2,3-epoxysqualene, which is considered to be a rate-limiting enzyme in steroid biosynthesis. Then, the lanosterol synthase ERG7 catalyzes the cyclization of (S)-2,3 oxidosqualene to lanosterol, a reaction that forms the sterol core. In the next steps, lanosterol is transformed to zymosterol through a complex process involving various demethylation, reduction and desaturation reactions. The lanosterol 14-alpha-demethylase ERG11 (also known as CYP51) catalyzes C14-demethylation of lanosterol to produce 4,4'-dimethyl cholesta-8,14,24-triene-3-beta-ol, which is critical for ergosterol biosynthesis. The C-14 reductase ERG24 reduces the C14=C15 double bond of 4,4-dimethyl-cholesta-8,14,24-trienol to produce 4,4-dimethyl-cholesta-8,24-dienol. 4,4-dimethyl-cholesta-8,24-dienol is substrate of the C-4 demethylation complex ERG25-ERG26-ERG27 in which ERG25 catalyzes the three-step monooxygenation required for the demethylation of 4,4-dimethyl and 4alpha-methylsterols, ERG26 catalyzes the oxidative decarboxylation that results in a reduction of the 3-beta-hydroxy group at the C-3 carbon to an oxo group, and ERG27 is responsible for the reduction of the keto group on the C-3. ERG28 has a role as a scaffold to help anchor ERG25, ERG26 and ERG27 to the endoplasmic reticulum and ERG29 regulates the activity of the iron-containing C4-methylsterol oxidase ERG25. Then, the sterol 24-C-methyltransferase ERG6 catalyzes the methyl transfer from S-adenosyl-methionine to the C-24 of zymosterol to form fecosterol. The C-8 sterol isomerase ERG2 catalyzes the reaction which results in unsaturation at C-7 in the B ring of sterols and thus converts fecosterol to episterol. The sterol-C5-desaturase ERG3 then catalyzes the introduction of a C-5 double bond in the B ring to produce 5-dehydroepisterol. The C-22 sterol desaturase ERG5 further converts 5-dehydroepisterol into ergosta-5,7,22,24(28)-tetraen-3beta-ol by forming the C-22(23) double bond in the sterol side chain. Finally, ergosta-5,7,22,24(28)-tetraen-3beta-ol is substrate of the C-24(28) sterol reductase ERG4 to produce ergosterol. The sequence is that of Sterol-4-alpha-carboxylate 3-dehydrogenase ERG26, decarboxylating from Candida albicans (strain SC5314 / ATCC MYA-2876) (Yeast).